The following is a 280-amino-acid chain: MADSTGPISLTVHGAAGRMGRRVVALGLADPNFQLVGAIDHAKSDHLGQDSGAVAGEAPSGIEISSHWPVLDDAATNQAVIDFSLPEAIDGCVEHCVKVGSPLVVATTGLSDEQKQNLSEAAASIPVVWAPSMSLAVNLSMKIAEQITAALKDVAGGLDVEILERHHRFKADAPSGTALKFGELIAGQLGESTSHVHGREGHTGARTREEIGYHAIRVGDNPGEHTIVFGMLGEKIELNVAASNRDCYASGALAAAKWLIHQKKGPGLYSMFDVLGMSDN.

NAD(+) is bound by residues 14 to 19 (GAAGRM), Asp40, 106 to 108 (ATT), and 130 to 133 (APSM). His166 serves as the catalytic Proton donor/acceptor. His167 serves as a coordination point for (S)-2,3,4,5-tetrahydrodipicolinate. Residue Lys170 is the Proton donor of the active site. 176-177 (GT) is a (S)-2,3,4,5-tetrahydrodipicolinate binding site.

Belongs to the DapB family.

It is found in the cytoplasm. It catalyses the reaction (S)-2,3,4,5-tetrahydrodipicolinate + NAD(+) + H2O = (2S,4S)-4-hydroxy-2,3,4,5-tetrahydrodipicolinate + NADH + H(+). It carries out the reaction (S)-2,3,4,5-tetrahydrodipicolinate + NADP(+) + H2O = (2S,4S)-4-hydroxy-2,3,4,5-tetrahydrodipicolinate + NADPH + H(+). Its pathway is amino-acid biosynthesis; L-lysine biosynthesis via DAP pathway; (S)-tetrahydrodipicolinate from L-aspartate: step 4/4. In terms of biological role, catalyzes the conversion of 4-hydroxy-tetrahydrodipicolinate (HTPA) to tetrahydrodipicolinate. The chain is 4-hydroxy-tetrahydrodipicolinate reductase from Rhodopirellula baltica (strain DSM 10527 / NCIMB 13988 / SH1).